Reading from the N-terminus, the 449-residue chain is UPF0761 membrane protein Cpha266_1653 (449 aa).

The next 6 helical transmembrane spans lie at leucine 77–phenylalanine 97, serine 133–isoleucine 153, phenylalanine 173–alanine 193, leucine 214–valine 234, alanine 244–phenylalanine 264, and glycine 277–leucine 297.

This sequence belongs to the UPF0761 family.

It localises to the cell inner membrane. The polypeptide is UPF0761 membrane protein Cpha266_1653 (Chlorobium phaeobacteroides (strain DSM 266 / SMG 266 / 2430)).